Consider the following 61-residue polypeptide: Small ribosomal subunit protein uS14 (61 aa).

Positions 24, 27, 40, and 43 each coordinate Zn(2+).

It belongs to the universal ribosomal protein uS14 family. Zinc-binding uS14 subfamily. In terms of assembly, part of the 30S ribosomal subunit. Contacts proteins S3 and S10. Zn(2+) is required as a cofactor.

In terms of biological role, binds 16S rRNA, required for the assembly of 30S particles and may also be responsible for determining the conformation of the 16S rRNA at the A site. The protein is Small ribosomal subunit protein uS14 of Mycoplasma genitalium (strain ATCC 33530 / DSM 19775 / NCTC 10195 / G37) (Mycoplasmoides genitalium).